The chain runs to 275 residues: Undecaprenyl-diphosphatase (275 aa).

8 consecutive transmembrane segments (helical) span residues 4–24, 54–74, 92–112, 123–143, 154–174, 194–214, 228–248, and 255–275; these read IYGLVVALILGIVEGLTEFLP, LGSILAVIIICKQRWFLLFGL, LHLYHIILGLIPSSILGLMFY, YVMYSLILGSLLLLISQLIHD, ISYLQAFLIGCFQCFALLPGF, AFEFSFLLAVPMIFGATILDL, MFIIGFITAFLVALITIKLFW, and SFIPFVLYRFLLVIVFYLILI.

It belongs to the UppP family.

It is found in the cell membrane. It catalyses the reaction di-trans,octa-cis-undecaprenyl diphosphate + H2O = di-trans,octa-cis-undecaprenyl phosphate + phosphate + H(+). Its function is as follows. Catalyzes the dephosphorylation of undecaprenyl diphosphate (UPP). Confers resistance to bacitracin. In Baumannia cicadellinicola subsp. Homalodisca coagulata, this protein is Undecaprenyl-diphosphatase.